The chain runs to 1312 residues: Beta-N-acetylhexosaminidase (1312 aa).

The first 33 residues, 1–33 (MKHEKQQRFSIRKYAVGAASVLIGFAFQAQTVA), serve as a signal peptide directing secretion. Residues 38-59 (TPTTTENQPTIHTVSDSPQSSE) are compositionally biased toward polar residues. The interval 38–178 (TPTTTENQPT…ATEAGKERAA (141 aa)) is disordered. Residues 118 to 177 (AEKETANKKAEEASPKKEEAKEVDSKESNTDKTDKDKPAKKDEAKAEADKPATEAGKERA) show a composition bias toward basic and acidic residues. Catalytic domain regions lie at residues 176 to 616 (RAAT…TPEA) and 621 to 1046 (EAKR…PAVT). 2 G5 domains span residues 1059–1138 (NVET…GAPV) and 1150–1230 (TTEV…GTMV). Positions 1244–1290 (EEKPKLEIPSQPAPSTAPAEESKVLPQDPAPVVTEKKLPETGTHDSA) are disordered. Residues 1277–1286 (TEKKLPETGT) show a composition bias toward basic and acidic residues. Residues 1281-1285 (LPETG) carry the LPXTG sorting signal motif. Residue Thr1284 is modified to Pentaglycyl murein peptidoglycan amidated threonine. Residues 1285–1312 (GTHDSAGLVVAGLMSTLAAYGLTKRKED) constitute a propeptide, removed by sortase.

This sequence belongs to the glycosyl hydrolase 20 family.

Its subcellular location is the secreted. The protein resides in the cell wall. The catalysed reaction is Hydrolysis of terminal non-reducing N-acetyl-D-hexosamine residues in N-acetyl-beta-D-hexosaminides.. This Streptococcus pneumoniae serotype 4 (strain ATCC BAA-334 / TIGR4) protein is Beta-N-acetylhexosaminidase (strH).